Consider the following 181-residue polypeptide: Probable GTP-binding protein EngB (181 aa).

Positions 18–181 (PKNEICFVGR…LQDLVNNLFN (164 aa)) constitute an EngB-type G domain. Residues 26–33 (GRSNVGKS), 52–56 (GKTKL), 70–73 (DLPG), 137–140 (TKRD), and 164–166 (VSI) contribute to the GTP site. 2 residues coordinate Mg(2+): S33 and T54.

Belongs to the TRAFAC class TrmE-Era-EngA-EngB-Septin-like GTPase superfamily. EngB GTPase family. Mg(2+) is required as a cofactor.

In terms of biological role, necessary for normal cell division and for the maintenance of normal septation. The sequence is that of Probable GTP-binding protein EngB from Mycoplasma mobile (strain ATCC 43663 / 163K / NCTC 11711) (Mesomycoplasma mobile).